The chain runs to 440 residues: Zinc finger MYND domain-containing protein 10 (440 aa).

The interval 366-440 is interaction with DNAAF11; it reads QDLRLQARRW…VLAAQGDRAK (75 aa). Residues Cys394, Cys397, Cys405, Cys408, Cys414, Cys418, His426, and Cys430 each contribute to the Zn(2+) site. The segment at 394-430 adopts an MYND-type zinc-finger fold; it reads CAYCSAEASKRCSRCQNEWYCCRECQVKHWEKHGKTC.

The protein belongs to the ZMYND10 family. As to quaternary structure, interacts (via C-terminus) with DNAAF11 (via CS domain); this interaction stabilizes DNAAF11 at the protein level. Interacts (via C-terminus) with DNAL1; this interaction stabilizes DNAL1 at the protein level. Interacts with DNAAF4, HSPA8, IQUB, RUVBL2 and DYNTL5.

The protein resides in the cytoplasm. Its subcellular location is the cytoskeleton. It localises to the microtubule organizing center. It is found in the centrosome. The protein localises to the centriolar satellite. The protein resides in the apical cell membrane. Its subcellular location is the dynein axonemal particle. Plays a role in axonemal structure organization and motility. Involved in axonemal pre-assembly of inner and outer dynein arms (IDA and ODA, respectively) for proper axoneme building for cilia motility. May act by indirectly regulating transcription of dynein proteins. The protein is Zinc finger MYND domain-containing protein 10 of Homo sapiens (Human).